A 151-amino-acid polypeptide reads, in one-letter code: UPF0208 membrane protein PC1_2779 (151 aa).

The next 2 membrane-spanning stretches (helical) occupy residues 46–66 (FGIRIMPPLAVFTLTWQIALG) and 69–89 (LGPAIATALFACSLPLQGLWW).

It belongs to the UPF0208 family.

It is found in the cell inner membrane. In Pectobacterium carotovorum subsp. carotovorum (strain PC1), this protein is UPF0208 membrane protein PC1_2779.